Consider the following 125-residue polypeptide: Bublin coiled-coil protein (125 aa).

Positions 46 to 95 form a coiled coil; it reads IRKLDTQLDHLNDYMSKMEERLKAHNDRMMETLKQQKEEREKRRRSFHER. Residues 79 to 125 form a disordered region; it reads KQQKEEREKRRRSFHERMSQNQSEDEEFKKQMSSILKRVQSVKRTEK.

In terms of tissue distribution, expressed in many epithelial tissues, including the pharynx, intestine, excretory canal and hypodermis.

It is found in the cell junction. It localises to the cytoplasm. The protein resides in the cytoskeleton. In terms of biological role, dynamic component of the endotube in intestinal cells, interacts with intermediate filament and regulates intestinal lumen morphology. This chain is Bublin coiled-coil protein, found in Caenorhabditis elegans.